A 525-amino-acid polypeptide reads, in one-letter code: Neutrophil cytosol factor 2 (525 aa).

TPR repeat units lie at residues 37 to 70 (SRIC…DKHS), 71 to 104 (AVAY…LRGN), and 121 to 154 (CEVL…KSEP). A Phosphothreonine modification is found at Thr-233. The SH3 1 domain occupies 240–299 (LEGEAHRVLFGFVPETPEELQVMPGNIVFVLKKGSDNWATVMFNGQKGLVPCNYLEPVEL). The tract at residues 304–343 (QSQPQEDTSPESDIPPPPNSSPPGRLQLSPGHKQKEPKEL) is disordered. A phosphoserine mark is found at Ser-324 and Ser-398. One can recognise a PB1 domain in the interval 350 to 428 (PYMLKVHYKY…YCLTLWCEHT (79 aa)). A disordered region spans residues 437-457 (EPIQRENSDASKQTTEPQPKE). The 60-residue stretch at 456–515 (KEGTQVVAIFSYEAAQPEDLEFVEGDVILVLSHVNEEWLEGECKGKVGIFPKAFVEGCAA) folds into the SH3 2 domain.

This sequence belongs to the NCF2/NOXA1 family. Component of the phagocyte NADPH oxidase complex composed of an obligatory core heterodimer formed by the membrane proteins CYBA and CYBB and the cytosolic regulatory subunits NCF1/p47-phox, NCF2/p67-phox, NCF4/p40-phox and the small GTPase RAC1 or RAC2. Part of a cytosolic complex composed at least by NCF1, NCF2 and NCF4. Interacts with NCF4. Interacts (via the C-terminal SH3 domain) with NCF1 (via C-terminus). Interacts with SYTL1 and RAC1. May interact with NOXO1. Interacts with S100A8 and calprotectin (S100A8/9). Interacts with GBP7 (via GB1/RHD3-type G domain). Interacts with CYBB; the interaction is enhanced in the presence of GBP7.

It is found in the cytoplasm. Its function is as follows. NCF2, NCF1, and a membrane bound cytochrome b558 are required for activation of the latent NADPH oxidase (necessary for superoxide production). Functionally, subunit of the phagocyte NADPH oxidase complex that mediates the transfer of electrons from cytosolic NADPH to O2 to produce the superoxide anion (O2(-)). In the activated complex, electrons are first transferred from NADPH to flavin adenine dinucleotide (FAD) and subsequently transferred via two heme molecules to molecular oxygen, producing superoxide through an outer-sphere reaction. Activation of the NADPH oxidase complex is initiated by the assembly of cytosolic subunits of the NADPH oxidase complex with the core NADPH oxidase complex to form a complex at the plasma membrane or phagosomal membrane. This activation process is initiated by phosphorylation dependent binding of the cytosolic NCF1/p47-phox subunit to the C-terminus of CYBA/p22-phox. In Mus musculus (Mouse), this protein is Neutrophil cytosol factor 2.